The sequence spans 380 residues: Methylthioribose-1-phosphate isomerase (380 aa).

Catalysis depends on Asp257, which acts as the Proton donor.

Belongs to the eIF-2B alpha/beta/delta subunits family. MtnA subfamily.

Its subcellular location is the cytoplasm. The protein localises to the nucleus. The catalysed reaction is 5-(methylsulfanyl)-alpha-D-ribose 1-phosphate = 5-(methylsulfanyl)-D-ribulose 1-phosphate. It functions in the pathway amino-acid biosynthesis; L-methionine biosynthesis via salvage pathway; L-methionine from S-methyl-5-thio-alpha-D-ribose 1-phosphate: step 1/6. Its function is as follows. Catalyzes the interconversion of methylthioribose-1-phosphate (MTR-1-P) into methylthioribulose-1-phosphate (MTRu-1-P). This is Methylthioribose-1-phosphate isomerase from Naegleria gruberi (Amoeba).